We begin with the raw amino-acid sequence, 108 residues long: Protein RnfH (108 aa).

The protein belongs to the UPF0125 (RnfH) family.

This chain is Protein RnfH, found in Laribacter hongkongensis (strain HLHK9).